Consider the following 160-residue polypeptide: Protein-export protein SecB (160 aa).

This sequence belongs to the SecB family. As to quaternary structure, homotetramer, a dimer of dimers. One homotetramer interacts with 1 SecA dimer.

It localises to the cytoplasm. Its function is as follows. One of the proteins required for the normal export of preproteins out of the cell cytoplasm. It is a molecular chaperone that binds to a subset of precursor proteins, maintaining them in a translocation-competent state. It also specifically binds to its receptor SecA. The polypeptide is Protein-export protein SecB (Orientia tsutsugamushi (strain Boryong) (Rickettsia tsutsugamushi)).